The sequence spans 499 residues: MTLILTSLLFFGLSLGPRTRVQAENLLKPILWAEPGPVITWHNPVTIWCQGTLEAQGYRLDKEGNSMSRHILKTLESENKVKLSIPSMMWEHAGRYHCYYQSPAGWSEPSDPLELVVTAYSRPTLSALPSPVVTSGVNVTLRCASRLGLGRFTLIEEGDHRLSWTLNSHQHNHGKFQALFPMGPLTFSNRGTFRCYGYENNTPYVWSEPSDPLQLLVSGVSRKPSLLTLQGPVVTPGENLTLQCGSDVGYIRYTLYKEGADGLPQRPGRQPQAGLSQANFTLSPVSRSYGGQYRCYGAHNVSSEWSAPSDPLDILIAGQISDRPSLSVQPGPTVTSGEKVTLLCQSWDPMFTFLLTKEGAAHPPLRLRSMYGAHKYQAEFPMSPVTSAHAGTYRCYGSRSSNPYLLSHPSEPLELVVSGATETLNPAQKKSDSKTAPHLQDYTVENLIRMGVAGLVLLFLGILLFEAQHSQRSPPRCSQEANSRKDNAPFRVVEPWEQI.

A signal peptide spans 1 to 23 (MTLILTSLLFFGLSLGPRTRVQA). Ig-like C2-type domains lie at 24–118 (ENLL…LVVT), 123–213 (PTLS…SDPL), 224–313 (PSLL…DPLD), and 324–413 (PSLS…SEPL). Residues 24–446 (ENLLKPILWA…PHLQDYTVEN (423 aa)) lie on the Extracellular side of the membrane. Cysteine 49 and cysteine 98 are disulfide-bonded. Asparagine 138 carries an N-linked (GlcNAc...) asparagine glycan. A disulfide bridge connects residues cysteine 143 and cysteine 195. Residues asparagine 239, asparagine 279, and asparagine 300 are each glycosylated (N-linked (GlcNAc...) asparagine). The cysteines at positions 244 and 295 are disulfide-linked. Residues cysteine 344 and cysteine 395 are joined by a disulfide bond. Tyrosine 404 bears the 3'-nitrotyrosine mark. A helical transmembrane segment spans residues 447 to 467 (LIRMGVAGLVLLFLGILLFEA). The Cytoplasmic portion of the chain corresponds to 468–499 (QHSQRSPPRCSQEANSRKDNAPFRVVEPWEQI).

As to quaternary structure, interacts with FCER1G; this stabilizes the expression of both proteins at the cell membrane. Interacts with BST2; leads to activation of LILRA4-mediated signaling and down-regulation of the innate immune response to viral pathogens. In terms of tissue distribution, detected on plasmacytoid dendritic cells (at protein level). Detected on plasmacytoid dendritic cells, but not on monocytes or B cells.

The protein resides in the cell membrane. Functions coreceptor to limit the innate immune responses to viral infections; signaling occurs via FCER1G. Down-regulates the production of IFNA1, IFNA2, IFNA4, IFNB1 and TNF by plasmacytoid dendritic cells that have been exposed to influenza virus or cytidine-phosphate-guanosine (CpG) dinucleotides, indicating it functions as a negative regulator of TLR7 and TLR9 signaling cascades. Down-regulates interferon production in response to interaction with BST2 on HIV-1 infected cells. Activates a signaling cascade in complex with FCER1G that results in phosphorylation of Src family and Syk kinases and thereby triggers mobilization of intracellular Ca(2+). Does not interfere with the differentiation of plasmacytoid dendritic cells into antigen-presenting cells. The polypeptide is Leukocyte immunoglobulin-like receptor subfamily A member 4 (Homo sapiens (Human)).